Consider the following 671-residue polypeptide: DNA ligase (671 aa).

NAD(+)-binding positions include 32–36, 81–82, and Glu113; these read DAEYD and SL. Catalysis depends on Lys115, which acts as the N6-AMP-lysine intermediate. NAD(+) contacts are provided by Arg136, Glu173, Lys290, and Lys314. Zn(2+) is bound by residues Cys408, Cys411, Cys426, and Cys432. The BRCT domain occupies 593 to 671; the sequence is EIDSPFAGKT…ETEMLRLLGS (79 aa).

Belongs to the NAD-dependent DNA ligase family. LigA subfamily. Requires Mg(2+) as cofactor. It depends on Mn(2+) as a cofactor.

The enzyme catalyses NAD(+) + (deoxyribonucleotide)n-3'-hydroxyl + 5'-phospho-(deoxyribonucleotide)m = (deoxyribonucleotide)n+m + AMP + beta-nicotinamide D-nucleotide.. Its function is as follows. DNA ligase that catalyzes the formation of phosphodiester linkages between 5'-phosphoryl and 3'-hydroxyl groups in double-stranded DNA using NAD as a coenzyme and as the energy source for the reaction. It is essential for DNA replication and repair of damaged DNA. This is DNA ligase from Escherichia coli O127:H6 (strain E2348/69 / EPEC).